Reading from the N-terminus, the 398-residue chain is tRNA (guanine-N(7)-)-methyltransferase (398 aa).

The S-adenosyl-L-methionine site is built by glutamate 124, glutamate 149, and aspartate 176. Position 232 (aspartate 232) interacts with substrate.

It belongs to the class I-like SAM-binding methyltransferase superfamily. TrmB family.

It carries out the reaction guanosine(46) in tRNA + S-adenosyl-L-methionine = N(7)-methylguanosine(46) in tRNA + S-adenosyl-L-homocysteine. The protein operates within tRNA modification; N(7)-methylguanine-tRNA biosynthesis. In terms of biological role, catalyzes the formation of N(7)-methylguanine at position 46 (m7G46) in tRNA. This is tRNA (guanine-N(7)-)-methyltransferase from Helicobacter acinonychis (strain Sheeba).